The sequence spans 202 residues: NADH dehydrogenase [ubiquinone] iron-sulfur protein 7, mitochondrial (202 aa).

The N-terminal 56 residues, 1-56, are a transit peptide targeting the mitochondrion; sequence MLRRTSFNFTGRAMISRGSPEWSHRLDLKKGKKTTMMHKLGTSKPNNALQYAQMTL. C77, C78, C142, and C172 together coordinate [4Fe-4S] cluster.

This sequence belongs to the complex I 20 kDa subunit family. As to quaternary structure, complex I is composed of 45 different subunits This is a component of the iron-sulfur (IP) fragment of the enzyme. The cofactor is [4Fe-4S] cluster.

Its subcellular location is the mitochondrion. It catalyses the reaction a ubiquinone + NADH + 5 H(+)(in) = a ubiquinol + NAD(+) + 4 H(+)(out). Core subunit of the mitochondrial membrane respiratory chain NADH dehydrogenase (Complex I) that is believed to belong to the minimal assembly required for catalysis. Complex I functions in the transfer of electrons from NADH to the respiratory chain. The immediate electron acceptor for the enzyme is believed to be ubiquinone. The chain is NADH dehydrogenase [ubiquinone] iron-sulfur protein 7, mitochondrial (NDHK) from Trypanosoma brucei brucei.